The sequence spans 184 residues: NADH-quinone oxidoreductase subunit B (184 aa).

Residues Cys-37, Cys-38, Cys-103, and Cys-132 each contribute to the [4Fe-4S] cluster site.

It belongs to the complex I 20 kDa subunit family. NDH-1 is composed of 14 different subunits. Subunits NuoB, C, D, E, F, and G constitute the peripheral sector of the complex. [4Fe-4S] cluster is required as a cofactor.

It is found in the cell membrane. It catalyses the reaction a quinone + NADH + 5 H(+)(in) = a quinol + NAD(+) + 4 H(+)(out). Functionally, NDH-1 shuttles electrons from NADH, via FMN and iron-sulfur (Fe-S) centers, to quinones in the respiratory chain. The immediate electron acceptor for the enzyme in this species is believed to be a menaquinone. Couples the redox reaction to proton translocation (for every two electrons transferred, four hydrogen ions are translocated across the cytoplasmic membrane), and thus conserves the redox energy in a proton gradient. This Rhodococcus erythropolis (strain PR4 / NBRC 100887) protein is NADH-quinone oxidoreductase subunit B.